A 354-amino-acid polypeptide reads, in one-letter code: MSLFLRKRCLCLGFLLFHLLSQVSASLRCPSRCPPKCPSISPTCAPGVRSVLDGCSCCPVCARQRGESCSEMRPCDQSSGLYCDRSADPNNQTGICMVPEGDNCVFDGVIYRNGEKFEPNCQYFCTCRDGQIGCLPRCQLDVLLPGPDCPAPRKVAVPGECCEKWTCGSDEQGTQGTLGGLALPAYRPEATVGVEVSDSSINCIEQTTEWSACSKSCGMGVSTRVTNRNRQCEMVKQTRLCIVRPCEQEPEEVTDKKGKKCLRTKKSLKAIHLQFENCTSLYTYKPRFCGVCSDGRCCTPHNTKTIQVEFQCLPGEIIKKPVMVIGTCTCYSNCPQNNEAFLQDLELKTSRGEI.

The first 21 residues, 1 to 21, serve as a signal peptide directing secretion; it reads MSLFLRKRCLCLGFLLFHLLS. The region spanning 25–99 is the IGFBP N-terminal domain; the sequence is ASLRCPSRCP…NNQTGICMVP (75 aa). Intrachain disulfides connect cysteine 29–cysteine 55, cysteine 33–cysteine 57, cysteine 37–cysteine 58, cysteine 44–cysteine 61, cysteine 69–cysteine 83, and cysteine 75–cysteine 96. Asparagine 91 is a glycosylation site (N-linked (GlcNAc...) asparagine). One can recognise a VWFC domain in the interval 102–168; sequence DNCVFDGVIY…GECCEKWTCG (67 aa). Positions 202 to 247 constitute a TSP type-1 domain; that stretch reads NCIEQTTEWSACSKSCGMGVSTRVTNRNRQCEMVKQTRLCIVRPCE. Cysteine 241 carries S-palmitoyl cysteine lipidation. 5 disulfides stabilise this stretch: cysteine 261-cysteine 298, cysteine 278-cysteine 312, cysteine 289-cysteine 328, cysteine 292-cysteine 330, and cysteine 297-cysteine 334. The 75-residue stretch at 261–335 folds into the CTCK domain; that stretch reads CLRTKKSLKA…GTCTCYSNCP (75 aa). Asparagine 277 is a glycosylation site (N-linked (GlcNAc...) asparagine).

This sequence belongs to the CCN family. In terms of assembly, interacts with FBLN1. Interacts (via CTCK domain) with NOTCH1 (via the EGF-like repeat region). Interacts with GJA1/CX43. Interacts with ITGA5:ITGB1, ITGAV:ITGB3 and ITGAV:ITGB5. Interacts with ZDHHC22; the interaction may lead to CCN3 palmitoylation. In terms of processing, may be palmitoylated on Cys-241, which is important for extracellular secretion. In terms of tissue distribution, expressed in large vessels including the ascending aorta, carotid arteries, and the thoracic aorta, in medium-sized vessels such as coronary arteries and small pulmonary veins and also in small vessels. In addition, also found to be present in the heart (at protein level). Expressed in astrocytes (at protein level). Detected in brain, bone, lung and muscle tissues. Expressed in skin, expression highly increases 5 days post-wounding, peaking on the 7th day to decline after 9 days. Expressed in pancreatic ducts and beta-cell islets. Expressed in the brain, in arcuate nucleus ESR1/KISS1 neurons, during lactation (at protein level).

The protein localises to the secreted. It is found in the cytoplasm. The protein resides in the cell junction. It localises to the gap junction. Immediate-early protein playing a role in various cellular processes including proliferation, adhesion, migration, differentiation and survival. Acts by binding to integrins or membrane receptors such as NOTCH1. Essential regulator of hematopoietic stem and progenitor cell function. Inhibits myogenic differentiation through the activation of Notch-signaling pathway. Inhibits vascular smooth muscle cells proliferation by increasing expression of cell-cycle regulators such as CDKN2B or CDKN1A independently of TGFB1 signaling. Ligand of integrins ITGAV:ITGB3 and ITGA5:ITGB1, acts directly upon endothelial cells to stimulate pro-angiogenic activities and induces angiogenesis. In endothelial cells, supports cell adhesion, induces directed cell migration (chemotaxis) and promotes cell survival. Also plays a role in cutaneous wound healing acting as integrin receptor ligand. Supports skin fibroblast adhesion through ITGA5:ITGB1 and ITGA6:ITGB1 and induces fibroblast chemotaxis through ITGAV:ITGB5. Seems to enhance bFGF-induced DNA synthesis in fibroblasts. Involved in bone regeneration as a negative regulator. Enhances the articular chondrocytic phenotype, whereas it repressed the one representing endochondral ossification. Impairs pancreatic beta-cell function, inhibits beta-cell proliferation and insulin secretion. Plays a role as negative regulator of endothelial pro-inflammatory activation reducing monocyte adhesion, its anti-inflammatory effects occur secondary to the inhibition of NF-kappaB signaling pathway. Contributes to the control and coordination of inflammatory processes in atherosclerosis. Attenuates inflammatory pain through regulation of IL1B- and TNF-induced MMP9, MMP2 and CCL2 expression. Inhibits MMP9 expression through ITGB1 engagement. Brain osteoanabolic hormone. During lactation, maintains the maternal skeleton and viability of offspring. In this context, may act on osteochondral skeletal stem cells. This Mus musculus (Mouse) protein is CCN family member 3 (Ccn3).